Here is a 64-residue protein sequence, read N- to C-terminus: MVTKVKCPTCQTELEWGPQSPFRPFCSKRCQLIDLGEWADEEKRIPGEIDPELLPYPEEGEQWQ.

Residues cysteine 7, cysteine 10, cysteine 26, and cysteine 30 each coordinate Zn(2+). The segment at 44-64 (RIPGEIDPELLPYPEEGEQWQ) is disordered.

This sequence belongs to the DNA gyrase inhibitor YacG family. As to quaternary structure, interacts with GyrB. Requires Zn(2+) as cofactor.

Its function is as follows. Inhibits all the catalytic activities of DNA gyrase by preventing its interaction with DNA. Acts by binding directly to the C-terminal domain of GyrB, which probably disrupts DNA binding by the gyrase. In Aeromonas hydrophila subsp. hydrophila (strain ATCC 7966 / DSM 30187 / BCRC 13018 / CCUG 14551 / JCM 1027 / KCTC 2358 / NCIMB 9240 / NCTC 8049), this protein is DNA gyrase inhibitor YacG.